Consider the following 61-residue polypeptide: Photosystem II reaction center protein K (61 aa).

Residues 1–24 (MINIFSFICIYLHSALYSSSFFFG) constitute a propeptide that is removed on maturation. A helical membrane pass occupies residues 40–60 (MPVIPLFFFLLAFVWQAAVSF).

Belongs to the PsbK family. As to quaternary structure, PSII is composed of 1 copy each of membrane proteins PsbA, PsbB, PsbC, PsbD, PsbE, PsbF, PsbH, PsbI, PsbJ, PsbK, PsbL, PsbM, PsbT, PsbX, PsbY, PsbZ, Psb30/Ycf12, at least 3 peripheral proteins of the oxygen-evolving complex and a large number of cofactors. It forms dimeric complexes.

It localises to the plastid. It is found in the chloroplast thylakoid membrane. One of the components of the core complex of photosystem II (PSII). PSII is a light-driven water:plastoquinone oxidoreductase that uses light energy to abstract electrons from H(2)O, generating O(2) and a proton gradient subsequently used for ATP formation. It consists of a core antenna complex that captures photons, and an electron transfer chain that converts photonic excitation into a charge separation. The chain is Photosystem II reaction center protein K from Pelargonium hortorum (Common geranium).